The sequence spans 136 residues: uncharacterized protein (136 aa).

The tract at residues 1-33 (MRDHLPPGLPPDPFADDPCDPSAALEAVEPGQP) is disordered.

To M.leprae ML0386.

This is an uncharacterized protein from Mycobacterium tuberculosis (strain CDC 1551 / Oshkosh).